The chain runs to 256 residues: DNA repair protein RecO (256 aa).

This sequence belongs to the RecO family.

Functionally, involved in DNA repair and RecF pathway recombination. In Rhizobium etli (strain CIAT 652), this protein is DNA repair protein RecO.